The chain runs to 99 residues: Small ribosomal subunit protein uS19 (99 aa).

This sequence belongs to the universal ribosomal protein uS19 family.

Protein S19 forms a complex with S13 that binds strongly to the 16S ribosomal RNA. The chain is Small ribosomal subunit protein uS19 from Sulfurihydrogenibium sp. (strain YO3AOP1).